Consider the following 351-residue polypeptide: Histidinol-phosphate aminotransferase (351 aa).

An N6-(pyridoxal phosphate)lysine modification is found at lysine 214.

Belongs to the class-II pyridoxal-phosphate-dependent aminotransferase family. Histidinol-phosphate aminotransferase subfamily. Requires pyridoxal 5'-phosphate as cofactor.

The catalysed reaction is L-histidinol phosphate + 2-oxoglutarate = 3-(imidazol-4-yl)-2-oxopropyl phosphate + L-glutamate. It participates in amino-acid biosynthesis; L-histidine biosynthesis; L-histidine from 5-phospho-alpha-D-ribose 1-diphosphate: step 7/9. This chain is Histidinol-phosphate aminotransferase, found in Methanosphaerula palustris (strain ATCC BAA-1556 / DSM 19958 / E1-9c).